The following is a 261-amino-acid chain: Class II histocompatibility antigen, M beta 1 chain (261 aa).

The N-terminal stretch at 1–18 (MAALWLLLLVLSLHCMGA) is a signal peptide. The beta-1 stretch occupies residues 19-112 (GGFVAHVEST…PFWNALTHRT (94 aa)). Topologically, residues 19-218 (GGFVAHVEST…PGLSPIQTVK (200 aa)) are lumenal. 3 disulfides stabilise this stretch: Cys29/Cys97, Cys43/Cys53, and Cys135/Cys192. Residue Asn75 is glycosylated (N-linked (GlcNAc...) asparagine). Positions 113–207 (RPPSVRVAQT…GTSEPIRGDW (95 aa)) are beta-2. Positions 114–204 (PPSVRVAQTT…QHSGTSEPIR (91 aa)) constitute an Ig-like C1-type domain. Residues 208-218 (TPGLSPIQTVK) are connecting peptide. Residues 219–239 (VSVSAATLGLGFIIFCVGFFR) form a helical membrane-spanning segment. Over 240–261 (WRKSHSSSYTPLSGSTYPEGRH) the chain is Cytoplasmic. Positions 248–251 (YTPL) match the YXXZ motif motif.

The protein belongs to the MHC class II family. In terms of assembly, heterodimer of an alpha chain (DMA) and a beta chain (DMB). Interacts with MHCII; this interaction mediates rapid selection of high-affinity peptides.

Its subcellular location is the late endosome membrane. It is found in the lysosome membrane. In terms of biological role, plays a critical role in catalyzing the release of class II-associated invariant chain peptide (CLIP) from newly synthesized MHC class II molecules and freeing the peptide binding site for acquisition of antigenic peptides. This chain is Class II histocompatibility antigen, M beta 1 chain (H2-DMb1), found in Mus musculus (Mouse).